We begin with the raw amino-acid sequence, 33 residues long: U13-ctenitoxin-Pn1c (33 aa).

Cystine bridges form between C3/C17, C10/C21, and C16/C30.

In terms of tissue distribution, expressed by the venom gland.

It is found in the secreted. In terms of biological role, acts as a neurotoxin. This is U13-ctenitoxin-Pn1c from Phoneutria nigriventer (Brazilian armed spider).